A 372-amino-acid polypeptide reads, in one-letter code: Adaptive-response sensory kinase SasA (372 aa).

Positions 147 to 360 (MVAHELRTPL…CFHFTVPVWQ (214 aa)) constitute a Histidine kinase domain. At His150 the chain carries Phosphohistidine; by autocatalysis.

As to quaternary structure, homooligomerizes. Interacts with KaiC. Participates in the KaiBC complex, whose core is composed of a KaiC homohexamer and 6 KaiB.

It catalyses the reaction ATP + protein L-histidine = ADP + protein N-phospho-L-histidine.. In terms of biological role, member of the two-component regulatory system SasA/RpaA involved in genome-wide circadian gene expression. One of several clock output pathways. Participates in the Kai clock protein complex, the main circadian regulator in cyanobacteria, via its interaction with KaiC. KaiC enhances the autophosphorylation activity of SasA, which then transfers its phosphate group to RpaA to activate it. In addition to its output function, recruits fold-shifted KaiB (KaiB(fs)) to KaiC to cooperatively form the KaiB(6):KaiC(6) complex (independent of SasA kinase activity). Required for robustness of the circadian rhythm of gene expression and is involved in clock output, also required for adaptation to light/dark cycles. The chain is Adaptive-response sensory kinase SasA from Prochlorococcus marinus (strain AS9601).